Consider the following 259-residue polypeptide: Protein POLYCHOME (259 aa).

Positions 236–259 (KMKSTPSAKRAEREKRVRTLMSMR) are disordered.

In terms of assembly, interacts with APC/C activators such as APC5, FZR2, FZR3, CDC20.1 and CDC20.5. Expressed mainly in actively dividing cells (e.g. central cylinder of the root tip, young leaves and vascular tissues).

It is found in the nucleus. Its function is as follows. Negative regulator of the anaphase-promoting complex/cyclosome (APC/C) ubiquitin ligase required for proper mitotic progression and cell fate determination; inhibits premature cell differentiation. Prevents DNA endoreplication by promoting the maintenance of the mitotic state by preferentially inhibiting APC/C(FZR) and triggering cyclins accumulation (e.g. CYCB1-1, CYCB1-2 and CYCA2-3) in a temporal manner. Required for megagametophyte and endosperm development. Counteracts the activity of CCS52A1 thus inhibiting the turnover of CYCA2-3. Confers immunity to bacterial pathogens (e.g. Pseudomonas syringae pv. tomato DC3000), which is associated with increased expression of disease resistance (R) genes. The protein is Protein POLYCHOME (PYM) of Arabidopsis thaliana (Mouse-ear cress).